The sequence spans 210 residues: Guanylate kinase (210 aa).

Residues 5–183 (GILFVISAPS…AVEEFKSIIL (179 aa)) form the Guanylate kinase-like domain. 12 to 19 (APSGAGKT) contributes to the ATP binding site.

Belongs to the guanylate kinase family.

The protein resides in the cytoplasm. The enzyme catalyses GMP + ATP = GDP + ADP. Essential for recycling GMP and indirectly, cGMP. This is Guanylate kinase from Syntrophotalea carbinolica (strain DSM 2380 / NBRC 103641 / GraBd1) (Pelobacter carbinolicus).